A 454-amino-acid chain; its full sequence is Cobyrinate a,c-diamide synthase (454 aa).

The 196-residue stretch at 247–442 (KIGIAMDSAF…IHAHWASNPN (196 aa)) folds into the GATase cobBQ-type domain. Residue cysteine 329 is the Nucleophile of the active site.

The protein belongs to the CobB/CbiA family. Mg(2+) is required as a cofactor.

It catalyses the reaction cob(II)yrinate + 2 L-glutamine + 2 ATP + 2 H2O = cob(II)yrinate a,c diamide + 2 L-glutamate + 2 ADP + 2 phosphate + 2 H(+). It participates in cofactor biosynthesis; adenosylcobalamin biosynthesis; cob(II)yrinate a,c-diamide from sirohydrochlorin (anaerobic route): step 10/10. Its function is as follows. Catalyzes the ATP-dependent amidation of the two carboxylate groups at positions a and c of cobyrinate, using either L-glutamine or ammonia as the nitrogen source. The chain is Cobyrinate a,c-diamide synthase from Leptospira interrogans serogroup Icterohaemorrhagiae serovar copenhageni (strain Fiocruz L1-130).